Reading from the N-terminus, the 298-residue chain is Phosphatidylglycerol--prolipoprotein diacylglyceryl transferase (298 aa).

3 helical membrane-spanning segments follow: residues 17–37 (LAVRWYGLMYLVGFIAAIVVG), 59–79 (MMFYGVLGTVLGGRLGYVLFY), and 97–117 (GGMSFHGGFLGVTLAMMLFAW). Arginine 142 is a binding site for a 1,2-diacyl-sn-glycero-3-phospho-(1'-sn-glycerol). The next 2 helical transmembrane spans lie at 230-250 (MGAISALFLIGYGLARFTVEF) and 257-277 (FLGLLALGLSMGQWLSLPMIV).

Belongs to the Lgt family.

The protein resides in the cell inner membrane. It carries out the reaction L-cysteinyl-[prolipoprotein] + a 1,2-diacyl-sn-glycero-3-phospho-(1'-sn-glycerol) = an S-1,2-diacyl-sn-glyceryl-L-cysteinyl-[prolipoprotein] + sn-glycerol 1-phosphate + H(+). Its pathway is protein modification; lipoprotein biosynthesis (diacylglyceryl transfer). Its function is as follows. Catalyzes the transfer of the diacylglyceryl group from phosphatidylglycerol to the sulfhydryl group of the N-terminal cysteine of a prolipoprotein, the first step in the formation of mature lipoproteins. The sequence is that of Phosphatidylglycerol--prolipoprotein diacylglyceryl transferase from Burkholderia cenocepacia (strain ATCC BAA-245 / DSM 16553 / LMG 16656 / NCTC 13227 / J2315 / CF5610) (Burkholderia cepacia (strain J2315)).